The primary structure comprises 278 residues: Bis(5'-nucleosyl)-tetraphosphatase, symmetrical (278 aa).

It belongs to the Ap4A hydrolase family.

The enzyme catalyses P(1),P(4)-bis(5'-adenosyl) tetraphosphate + H2O = 2 ADP + 2 H(+). Hydrolyzes diadenosine 5',5'''-P1,P4-tetraphosphate to yield ADP. The polypeptide is Bis(5'-nucleosyl)-tetraphosphatase, symmetrical (Nitrosococcus oceani (strain ATCC 19707 / BCRC 17464 / JCM 30415 / NCIMB 11848 / C-107)).